A 668-amino-acid polypeptide reads, in one-letter code: Myb-like protein W (668 aa).

Disordered stretches follow at residues 57–124, 246–357, 403–432, 497–546, 561–583, and 631–668; these read LDQF…NESV, EKEK…EEEV, KPKS…TDKG, YTNT…NKER, SMGR…TTTS, and QCEE…DEII. A compositionally biased stretch (low complexity) spans 69-121; sequence NNNNNNNSNNNNNNNNNNNNNNNNNNNNNNNNNNNNNNNNNNYNNYNNNNNNN. Positions 246 to 268 are enriched in basic and acidic residues; it reads EKEKRKKEREEREEREKQEKQEQ. Residues 293–307 are compositionally biased toward low complexity; it reads NNKDNNHNGYYYYYD. Residues 308-318 are compositionally biased toward acidic residues; it reads NDNDNYNDGDD. Residues 319-335 are compositionally biased toward basic and acidic residues; that stretch reads EKEKEKEKEKEKEKENE. The region spanning 344-398 is the Myb-like domain; it reads TSMVNSEEWTEEEVNKMNEIRGKLSTADYNYWDKVSAHVKSKTAEQCQRKYNSRF. Low complexity predominate over residues 501–542; it reads NNNNNNNNNNNNNNNNNNNNNNNNNNNNNNNNNNNNNNNNNN. Residues 632 to 641 are compositionally biased toward basic and acidic residues; that stretch reads CEERKKKEDR. Over residues 642-651 the composition is skewed to acidic residues; the sequence is DVDEDGEDDY.

The chain is Myb-like protein W (mybW) from Dictyostelium discoideum (Social amoeba).